Here is a 444-residue protein sequence, read N- to C-terminus: ATP-dependent protease ATPase subunit HslU (444 aa).

Residues Ile18 and 60-65 contribute to the ATP site; that span reads GVGKTE. The interval 143–163 is disordered; the sequence is WGEVENHDSHSSTRQAFRKKL. Asp257, Glu322, and Arg394 together coordinate ATP.

Belongs to the ClpX chaperone family. HslU subfamily. In terms of assembly, a double ring-shaped homohexamer of HslV is capped on each side by a ring-shaped HslU homohexamer. The assembly of the HslU/HslV complex is dependent on binding of ATP.

It localises to the cytoplasm. Its function is as follows. ATPase subunit of a proteasome-like degradation complex; this subunit has chaperone activity. The binding of ATP and its subsequent hydrolysis by HslU are essential for unfolding of protein substrates subsequently hydrolyzed by HslV. HslU recognizes the N-terminal part of its protein substrates and unfolds these before they are guided to HslV for hydrolysis. This is ATP-dependent protease ATPase subunit HslU from Haemophilus influenzae (strain 86-028NP).